Consider the following 180-residue polypeptide: MFATRSFCLSSSLFRPAAQLLRPAGRSTLRNVWRRSIATEHLTQTEANSRLASQRVHRPNSPHLTIYEPQLTWYLSSLHRITGCVVAGTLYAFAMGYLVAPLAGYSLDTATISGLIQQVPTWIKVPAKFVISYPLTFHIFNGIRHLIWDTTKELSLKGVYRTGYAVLALSVLTSGYFAMI.

Residues 1-82 are Mitochondrial matrix-facing; it reads MFATRSFCLS…WYLSSLHRIT (82 aa). Residues 83–103 form a helical membrane-spanning segment; sequence GCVVAGTLYAFAMGYLVAPLA. Topologically, residues 104-122 are mitochondrial intermembrane; that stretch reads GYSLDTATISGLIQQVPTW. The chain crosses the membrane as a helical span at residues 123–143; it reads IKVPAKFVISYPLTFHIFNGI. Histidine 138 contributes to the heme binding site. At 144 to 159 the chain is on the mitochondrial matrix side; sequence RHLIWDTTKELSLKGV. Residues 160-180 form a helical membrane-spanning segment; that stretch reads YRTGYAVLALSVLTSGYFAMI.

It belongs to the cytochrome b560 family. As to quaternary structure, forms part of complex II containing four subunits: a 70 kDa flavoprotein (FP), a 27 kDa iron-sulfur protein (IP), a cytochrome B and a membrane-anchoring protein. Requires heme as cofactor.

It is found in the mitochondrion inner membrane. It participates in carbohydrate metabolism; tricarboxylic acid cycle. In terms of biological role, membrane-anchoring subunit of succinate dehydrogenase (SDH) that is involved in complex II of the mitochondrial electron transport chain and is responsible for transferring electrons from succinate to ubiquinone (coenzyme Q). The chain is Succinate dehydrogenase cytochrome B subunit, mitochondrial (sdh3) from Schizosaccharomyces pombe (strain 972 / ATCC 24843) (Fission yeast).